Here is a 167-residue protein sequence, read N- to C-terminus: ATP synthase subunit b (167 aa).

A helical transmembrane segment spans residues 7 to 25; it reads SFLLAVSFVIFIYLIYRPA.

This sequence belongs to the ATPase B chain family. In terms of assembly, F-type ATPases have 2 components, F(1) - the catalytic core - and F(0) - the membrane proton channel. F(1) has five subunits: alpha(3), beta(3), gamma(1), delta(1), epsilon(1). F(0) has three main subunits: a(1), b(2) and c(10-14). The alpha and beta chains form an alternating ring which encloses part of the gamma chain. F(1) is attached to F(0) by a central stalk formed by the gamma and epsilon chains, while a peripheral stalk is formed by the delta and b chains.

The protein resides in the cell inner membrane. Functionally, f(1)F(0) ATP synthase produces ATP from ADP in the presence of a proton or sodium gradient. F-type ATPases consist of two structural domains, F(1) containing the extramembraneous catalytic core and F(0) containing the membrane proton channel, linked together by a central stalk and a peripheral stalk. During catalysis, ATP synthesis in the catalytic domain of F(1) is coupled via a rotary mechanism of the central stalk subunits to proton translocation. In terms of biological role, component of the F(0) channel, it forms part of the peripheral stalk, linking F(1) to F(0). The protein is ATP synthase subunit b of Rickettsia typhi (strain ATCC VR-144 / Wilmington).